Consider the following 709-residue polypeptide: Fatty acid oxidation complex subunit alpha (709 aa).

Positions 1 to 188 (MEKTFNLTRR…KMGLVNDVVP (188 aa)) are enoyl-CoA hydratase. The segment at 308–709 (RKVKKAVILG…AMAAEKARFF (402 aa)) is 3-hydroxyacyl-CoA dehydrogenase.

The protein in the N-terminal section; belongs to the enoyl-CoA hydratase/isomerase family. It in the central section; belongs to the 3-hydroxyacyl-CoA dehydrogenase family. As to quaternary structure, heterotetramer of two alpha chains (FadJ) and two beta chains (FadI).

It localises to the cytoplasm. It carries out the reaction a (3S)-3-hydroxyacyl-CoA = a (2E)-enoyl-CoA + H2O. It catalyses the reaction a 4-saturated-(3S)-3-hydroxyacyl-CoA = a (3E)-enoyl-CoA + H2O. The enzyme catalyses a (3S)-3-hydroxyacyl-CoA + NAD(+) = a 3-oxoacyl-CoA + NADH + H(+). The catalysed reaction is (3S)-3-hydroxybutanoyl-CoA = (3R)-3-hydroxybutanoyl-CoA. It participates in lipid metabolism; fatty acid beta-oxidation. Catalyzes the formation of a hydroxyacyl-CoA by addition of water on enoyl-CoA. Also exhibits 3-hydroxyacyl-CoA epimerase and 3-hydroxyacyl-CoA dehydrogenase activities. In Shewanella sp. (strain ANA-3), this protein is Fatty acid oxidation complex subunit alpha.